The primary structure comprises 335 residues: Dihydroorotate dehydrogenase (quinone) (335 aa).

FMN-binding positions include 58 to 62 (AGADK) and threonine 82. Lysine 62 contributes to the substrate binding site. 107–111 (NRNGF) contributes to the substrate binding site. The FMN site is built by asparagine 135 and asparagine 168. Residue asparagine 168 participates in substrate binding. The active-site Nucleophile is the serine 171. Asparagine 173 serves as a coordination point for substrate. Lysine 213 and glycine 241 together coordinate FMN. Residue 242–243 (NT) participates in substrate binding. Residues glycine 264, glycine 293, and 314-315 (YS) each bind FMN.

Belongs to the dihydroorotate dehydrogenase family. Type 2 subfamily. In terms of assembly, monomer. It depends on FMN as a cofactor.

It localises to the cell membrane. It carries out the reaction (S)-dihydroorotate + a quinone = orotate + a quinol. Its pathway is pyrimidine metabolism; UMP biosynthesis via de novo pathway; orotate from (S)-dihydroorotate (quinone route): step 1/1. In terms of biological role, catalyzes the conversion of dihydroorotate to orotate with quinone as electron acceptor. The polypeptide is Dihydroorotate dehydrogenase (quinone) (Actinobacillus pleuropneumoniae serotype 5b (strain L20)).